Reading from the N-terminus, the 312-residue chain is MEEECRVLSIQSHVVRGYVGNRAATFPLQVLGFEVDAVNSVQFSNHTGYSHWKGQVLNSDELQELYDGLKLNSVNQYDYVLTGYTRDKSFLAMVVDIVQELKQQNPRLVYVCDPVMGDQRDGEGAMYVPDDLLPVYREKVVPVADIITPNQFEAELLTGRKIHTQEEALEVMDMLHSMGPDTVVITSSDLLSPRGSDYLMALGSQRTRAPDGSMVTQRIRMEMHKVDAVFVGTGDLFAAMLLAWTHKHPNNLKVACEKTVSAMHHVLQRTIKCAKAKSGEGVKPSPAQLELRMVQSKKDIESPEIVVQATVL.

Met-1 carries the post-translational modification N-acetylmethionine. The pyridoxal site is built by Ser-12 and Thr-47. Pyridoxal 5'-phosphate is bound at residue Thr-47. Phosphoserine is present on Ser-59. Asp-113 contacts ATP. Residue Asp-113 participates in Na(+) binding. A Mg(2+)-binding site is contributed by Asp-118. Thr-148 is a binding site for Na(+). Residues 150-153 (NQFE) and 186-187 (TS) contribute to the ATP site. Residue Thr-186 participates in Na(+) binding. Ser-213 carries the phosphoserine modification. ATP contacts are provided by residues 226-228 (VDA) and Thr-233. 234–235 (GD) contributes to the pyridoxal 5'-phosphate binding site. Asp-235 acts as the Proton acceptor in catalysis. Ser-285 carries the post-translational modification Phosphoserine.

It belongs to the pyridoxine kinase family. Homodimer. Zn(2+) is required as a cofactor. Requires Mg(2+) as cofactor.

It localises to the cytoplasm. The protein resides in the cytosol. The enzyme catalyses pyridoxal + ATP = pyridoxal 5'-phosphate + ADP + H(+). The catalysed reaction is pyridoxamine + ATP = pyridoxamine 5'-phosphate + ADP + H(+). It catalyses the reaction pyridoxine + ATP = pyridoxine 5'-phosphate + ADP + H(+). It functions in the pathway cofactor metabolism; pyridoxal 5'-phosphate salvage; pyridoxal 5'-phosphate from pyridoxal: step 1/1. Its pathway is cofactor metabolism; pyridoxal 5'-phosphate salvage; pyridoxine 5'-phosphate from pyridoxine: step 1/1. It participates in cofactor metabolism; pyridoxal 5'-phosphate salvage; pyridoxamine 5'-phosphate from pyridoxamine: step 1/1. Its activity is regulated as follows. Activity is increased in the presence of K(+)or Na(+). In terms of biological role, catalyzes the phosphorylation of the dietary vitamin B6 vitamers pyridoxal (PL), pyridoxine (PN) and pyridoxamine (PM) to form pyridoxal 5'-phosphate (PLP), pyridoxine 5'-phosphate (PNP) and pyridoxamine 5'-phosphate (PMP), respectively. PLP is the active form of vitamin B6, and acts as a cofactor for over 140 different enzymatic reactions. The protein is Pyridoxal kinase (PDXK) of Bos taurus (Bovine).